Reading from the N-terminus, the 356-residue chain is MTNIVPRILGFVLFVLGAAIFLTEVMHSYHRFVKQSEEYSISNSNTDDAPTKKKQMKAFFSLYHNMDELKAQNSDVVQPRVLKGTAREFCNNTDHCIRPFLNHETRYRVAPDYKMAHCVVHKSMSTVITGIWCYLFNRNRFVRVDKQMNMSEWDKESLCRGDNTFRHLKSLQKKYNASEMTGWSLSMITRDPIDRFISGYVDRCIRVAEGPSPCNGCDKNMTCFILSEYERFKKQAHKGVLTNTFEDRHFYPQNWRCDIKTMRNKYEFIRYSSDASKELMEDLFKIARRQGIPEKELEYIENELTKNRKTSHTTAYSPAREFFQRRLRESPLLMEYVVRMFYHDFVILNYPLPEGF.

Residues 8-28 traverse the membrane as a helical segment; it reads ILGFVLFVLGAAIFLTEVMHS.

This sequence to C.elegans C41C4.1 and C18B2.1.

It is found in the membrane. This is an uncharacterized protein from Caenorhabditis elegans.